Here is a 290-residue protein sequence, read N- to C-terminus: Protoheme IX farnesyltransferase 1 (290 aa).

Transmembrane regions (helical) follow at residues 8-28 (ITKP…FFLA), 36-56 (FLLL…GCVV), 85-105 (AAFV…FQVV), 108-128 (LSAV…TMWY), 131-151 (NSVY…LVGY), 152-172 (LAVT…FCLW), 211-231 (AYVV…EAGY), and 269-289 (LLVV…LPFI).

Belongs to the UbiA prenyltransferase family. Protoheme IX farnesyltransferase subfamily.

It is found in the cell inner membrane. It catalyses the reaction heme b + (2E,6E)-farnesyl diphosphate + H2O = Fe(II)-heme o + diphosphate. It participates in porphyrin-containing compound metabolism; heme O biosynthesis; heme O from protoheme: step 1/1. Its function is as follows. Converts heme B (protoheme IX) to heme O by substitution of the vinyl group on carbon 2 of heme B porphyrin ring with a hydroxyethyl farnesyl side group. The chain is Protoheme IX farnesyltransferase 1 from Vibrio campbellii (strain ATCC BAA-1116).